A 358-amino-acid chain; its full sequence is Fructose-bisphosphate aldolase class 2 (358 aa).

Position 61 (S61) interacts with D-glyceraldehyde 3-phosphate. The active-site Proton donor is the D109. H110, D144, E174, and H226 together coordinate Zn(2+). G227 lines the dihydroxyacetone phosphate pocket. Position 264 (H264) interacts with Zn(2+). Residues 265 to 267 (GGS) and 286 to 289 (NIDT) contribute to the dihydroxyacetone phosphate site.

It belongs to the class II fructose-bisphosphate aldolase family. It depends on Zn(2+) as a cofactor.

The enzyme catalyses beta-D-fructose 1,6-bisphosphate = D-glyceraldehyde 3-phosphate + dihydroxyacetone phosphate. Its pathway is carbohydrate degradation; glycolysis; D-glyceraldehyde 3-phosphate and glycerone phosphate from D-glucose: step 4/4. Catalyzes the aldol condensation of dihydroxyacetone phosphate (DHAP or glycerone-phosphate) with glyceraldehyde 3-phosphate (G3P) to form fructose 1,6-bisphosphate (FBP) in gluconeogenesis and the reverse reaction in glycolysis. In Buchnera aphidicola subsp. Acyrthosiphon pisum (strain APS) (Acyrthosiphon pisum symbiotic bacterium), this protein is Fructose-bisphosphate aldolase class 2 (fbaA).